Reading from the N-terminus, the 586-residue chain is Dihydroxy-acid dehydratase 2 (586 aa).

Residue C68 participates in [2Fe-2S] cluster binding. Position 100 (D100) interacts with Mg(2+). C141 lines the [2Fe-2S] cluster pocket. D142 and K143 together coordinate Mg(2+). K143 carries the post-translational modification N6-carboxylysine. C213 contacts [2Fe-2S] cluster. Mg(2+) is bound at residue E463. S489 acts as the Proton acceptor in catalysis.

The protein belongs to the IlvD/Edd family. As to quaternary structure, homodimer. [2Fe-2S] cluster is required as a cofactor. Mg(2+) serves as cofactor.

The catalysed reaction is (2R)-2,3-dihydroxy-3-methylbutanoate = 3-methyl-2-oxobutanoate + H2O. It carries out the reaction (2R,3R)-2,3-dihydroxy-3-methylpentanoate = (S)-3-methyl-2-oxopentanoate + H2O. The protein operates within amino-acid biosynthesis; L-isoleucine biosynthesis; L-isoleucine from 2-oxobutanoate: step 3/4. It participates in amino-acid biosynthesis; L-valine biosynthesis; L-valine from pyruvate: step 3/4. Its function is as follows. Functions in the biosynthesis of branched-chain amino acids. Catalyzes the dehydration of (2R,3R)-2,3-dihydroxy-3-methylpentanoate (2,3-dihydroxy-3-methylvalerate) into 2-oxo-3-methylpentanoate (2-oxo-3-methylvalerate) and of (2R)-2,3-dihydroxy-3-methylbutanoate (2,3-dihydroxyisovalerate) into 2-oxo-3-methylbutanoate (2-oxoisovalerate), the penultimate precursor to L-isoleucine and L-valine, respectively. In Mesorhizobium japonicum (strain LMG 29417 / CECT 9101 / MAFF 303099) (Mesorhizobium loti (strain MAFF 303099)), this protein is Dihydroxy-acid dehydratase 2.